A 258-amino-acid chain; its full sequence is Tryptophan synthase alpha chain (258 aa).

Catalysis depends on proton acceptor residues E46 and D57.

The protein belongs to the TrpA family. Tetramer of two alpha and two beta chains.

It catalyses the reaction (1S,2R)-1-C-(indol-3-yl)glycerol 3-phosphate + L-serine = D-glyceraldehyde 3-phosphate + L-tryptophan + H2O. Its pathway is amino-acid biosynthesis; L-tryptophan biosynthesis; L-tryptophan from chorismate: step 5/5. In terms of biological role, the alpha subunit is responsible for the aldol cleavage of indoleglycerol phosphate to indole and glyceraldehyde 3-phosphate. This is Tryptophan synthase alpha chain from Phocaeicola vulgatus (strain ATCC 8482 / DSM 1447 / JCM 5826 / CCUG 4940 / NBRC 14291 / NCTC 11154) (Bacteroides vulgatus).